The chain runs to 188 residues: Elongation factor P (188 aa).

This sequence belongs to the elongation factor P family.

It localises to the cytoplasm. The protein operates within protein biosynthesis; polypeptide chain elongation. Involved in peptide bond synthesis. Stimulates efficient translation and peptide-bond synthesis on native or reconstituted 70S ribosomes in vitro. Probably functions indirectly by altering the affinity of the ribosome for aminoacyl-tRNA, thus increasing their reactivity as acceptors for peptidyl transferase. The protein is Elongation factor P of Methylorubrum populi (strain ATCC BAA-705 / NCIMB 13946 / BJ001) (Methylobacterium populi).